We begin with the raw amino-acid sequence, 1039 residues long: DIS3-like exonuclease 1 (1039 aa).

In terms of domain architecture, CSD1 spans 221-309; the sequence is PEHLPLEILE…KGRNGALCEN (89 aa). One can recognise a CSD2 domain in the interval 359 to 425; that stretch reads VLVMPWDYRI…AEIATILVEN (67 aa). The RNB domain occupies 458 to 807; sequence RLDLRKTHLV…VHRLLLAAVN (350 aa).

This sequence belongs to the RNR ribonuclease family. Component of the RNA exosome complex. The cofactor is Mg(2+).

The protein resides in the cytoplasm. The catalysed reaction is Exonucleolytic cleavage in the 3'- to 5'-direction to yield nucleoside 5'-phosphates.. Catalytic component of the RNA exosome complex which has 3'-&gt;5' exoribonuclease activity and participates in a multitude of cellular RNA processing and degradation events. This Xenopus tropicalis (Western clawed frog) protein is DIS3-like exonuclease 1 (dis3l).